A 515-amino-acid polypeptide reads, in one-letter code: Cytochrome P450 705A22 (515 aa).

Residues 9-29 (FQNCFIFILIFLLTFLCFFFF) form a helical membrane-spanning segment. Residue Cys454 coordinates heme.

This sequence belongs to the cytochrome P450 family. It depends on heme as a cofactor.

It is found in the membrane. Plays a role in the gravitropic response of the inflorescence stems and roots. May affect the synthesis of flavonols that have a role in regulating auxin transport. The sequence is that of Cytochrome P450 705A22 from Arabidopsis thaliana (Mouse-ear cress).